The sequence spans 88 residues: U-scoloptoxin(XY)-Er1a (88 aa).

Residues 1–24 (MASQVVLSFALVVVLAVFVGQVDS) form the signal peptide. A disordered region spans residues 66-88 (RPELSPGAWDDSSEEKDNEASLA). Residues 79 to 88 (EEKDNEASLA) constitute a propeptide that is removed on maturation.

Belongs to the scoloptoxin-XY family. Post-translationally, contains 3 disulfide bonds. In terms of tissue distribution, expressed by the venom gland.

It is found in the secreted. This is U-scoloptoxin(XY)-Er1a from Ethmostigmus rubripes (Giant centipede).